Here is a 288-residue protein sequence, read N- to C-terminus: 4-diphosphocytidyl-2-C-methyl-D-erythritol kinase (288 aa).

The active site involves lysine 8. 90-100 (PVGAGLAGGSS) contacts ATP. The active site involves aspartate 132.

This sequence belongs to the GHMP kinase family. IspE subfamily.

It carries out the reaction 4-CDP-2-C-methyl-D-erythritol + ATP = 4-CDP-2-C-methyl-D-erythritol 2-phosphate + ADP + H(+). It functions in the pathway isoprenoid biosynthesis; isopentenyl diphosphate biosynthesis via DXP pathway; isopentenyl diphosphate from 1-deoxy-D-xylulose 5-phosphate: step 3/6. Catalyzes the phosphorylation of the position 2 hydroxy group of 4-diphosphocytidyl-2C-methyl-D-erythritol. This Chlamydia trachomatis serovar L2b (strain UCH-1/proctitis) protein is 4-diphosphocytidyl-2-C-methyl-D-erythritol kinase.